We begin with the raw amino-acid sequence, 607 residues long: MLEISARLEEALNRAFIKVFPQEDRSSKTSSILTGSNLVPASKPEFGDFQINCALSLAKEIKQPPREIAQKIANQLQKDNDFVRMCNPPRIAGPGFINLSINSKTLISEIHVRLNDKRLGVPLKKFSTDKIEEGKSNNRVILDFSSPNIAKEMHVGHLRSTIIGDSLARILEFRGYEVLRLNHVGDWGTQFGMLITHLKEVVPEVLHTKDVVEISDLVNFYRQAKKRFDEDQIFQNKSRSEVVNLQAGDKESLIAWQLLCNQSRKEFQKIYDRLDIKLTERGESFYNKFLVDVINDLKNKKLLINDQGAQCIFLDGLVGKNGKPQPIIIQKSDGGFNYATTDLAAIKYRLTIPPHGDGACRLIYVTDAGQASHFSGVFQIAKLANWIPTDCQIEHVPFGLVQGEDGKKLKTRSGETIRLVDLLDEAIQRAKNDLKNRLNTERRSENENFIDKVSTTVGIASIKYADLSQNRISNYQFSFDKMLSLQGNTAPYLLYALVRIAGISRKGGDLNVSSHNIQFNESQEWELIRKLLQLDYIIAEVEKELLPNRLCGYLFELSQTFNRFYDQVPILKASEPSRASRLILCSITADTLKLGMSLLGIPTLERM.

The 'HIGH' region signature appears at proline 147–histidine 157.

Belongs to the class-I aminoacyl-tRNA synthetase family. Monomer.

It localises to the cytoplasm. It carries out the reaction tRNA(Arg) + L-arginine + ATP = L-arginyl-tRNA(Arg) + AMP + diphosphate. The sequence is that of Arginine--tRNA ligase from Prochlorococcus marinus (strain NATL2A).